The following is a 239-amino-acid chain: Large ribosomal subunit protein uL30 (239 aa).

The interval 1–37 (MSKFVPENVQKKLARDEKLRKAKAEQRKASSAQMKQR) is disordered. A compositionally biased stretch (basic and acidic residues) spans 9–28 (VQKKLARDEKLRKAKAEQRK).

Belongs to the universal ribosomal protein uL30 family.

The sequence is that of Large ribosomal subunit protein uL30 (RPL7) from Tetrahymena thermophila.